The primary structure comprises 439 residues: Sorting nexin-31 (439 aa).

One can recognise a PX domain in the interval 1-109; the sequence is MKMHFCIPVS…EFLTLVQLHT (109 aa). The tract at residues 384–409 is disordered; sequence TEQSPEMQIEVPEQGRSKKHPSQPSQ.

Belongs to the sorting nexin family. Interacts with CCDC22, CCDC93, VPS26C and VPS35L, associates with the retriever and CCC complexes.

Functionally, may be involved in protein trafficking. The protein is Sorting nexin-31 (Snx31) of Mus musculus (Mouse).